The primary structure comprises 130 residues: Small ribosomal subunit protein uS9 (130 aa).

The protein belongs to the universal ribosomal protein uS9 family.

The polypeptide is Small ribosomal subunit protein uS9 (Bacillus anthracis (strain A0248)).